Here is a 161-residue protein sequence, read N- to C-terminus: Crossover junction endodeoxyribonuclease RuvC (161 aa).

Active-site residues include Asp-9, Glu-69, and His-144. Residues Asp-9, Glu-69, and His-144 each contribute to the Mg(2+) site.

Belongs to the RuvC family. Homodimer which binds Holliday junction (HJ) DNA. The HJ becomes 2-fold symmetrical on binding to RuvC with unstacked arms; it has a different conformation from HJ DNA in complex with RuvA. In the full resolvosome a probable DNA-RuvA(4)-RuvB(12)-RuvC(2) complex forms which resolves the HJ. Mg(2+) is required as a cofactor.

Its subcellular location is the cytoplasm. The catalysed reaction is Endonucleolytic cleavage at a junction such as a reciprocal single-stranded crossover between two homologous DNA duplexes (Holliday junction).. In terms of biological role, the RuvA-RuvB-RuvC complex processes Holliday junction (HJ) DNA during genetic recombination and DNA repair. Endonuclease that resolves HJ intermediates. Cleaves cruciform DNA by making single-stranded nicks across the HJ at symmetrical positions within the homologous arms, yielding a 5'-phosphate and a 3'-hydroxyl group; requires a central core of homology in the junction. The consensus cleavage sequence is 5'-(A/T)TT(C/G)-3'. Cleavage occurs on the 3'-side of the TT dinucleotide at the point of strand exchange. HJ branch migration catalyzed by RuvA-RuvB allows RuvC to scan DNA until it finds its consensus sequence, where it cleaves and resolves the cruciform DNA. The chain is Crossover junction endodeoxyribonuclease RuvC from Borrelia turicatae (strain 91E135).